The sequence spans 544 residues: Methionine--tRNA ligase (544 aa).

The short motif at 10–20 (PYANGSLHLGH) is the 'HIGH' region element. Residues Cys-141, Cys-144, Cys-153, and Cys-156 each coordinate Zn(2+). The short motif at 329–333 (KLSTS) is the 'KMSKS' region element. ATP is bound at residue Thr-332.

This sequence belongs to the class-I aminoacyl-tRNA synthetase family. MetG type 1 subfamily. As to quaternary structure, monomer. It depends on Zn(2+) as a cofactor.

Its subcellular location is the cytoplasm. The catalysed reaction is tRNA(Met) + L-methionine + ATP = L-methionyl-tRNA(Met) + AMP + diphosphate. Functionally, is required not only for elongation of protein synthesis but also for the initiation of all mRNA translation through initiator tRNA(fMet) aminoacylation. In Bacillus cereus (strain B4264), this protein is Methionine--tRNA ligase.